The chain runs to 960 residues: Protein mono-ADP-ribosyltransferase PARP10 (960 aa).

Glu-103 carries the ADP-ribosyl glutamic acid modification. A compositionally biased stretch (polar residues) spans 325 to 341 (SMGSTSPVDPVESSTEL). The disordered stretch occupies residues 325–346 (SMGSTSPVDPVESSTELPEQVG). 2 positions are modified to phosphoserine: Ser-381 and Ser-388. The interval 553-576 (SPHGGEDRVPLEMEKEKPGGPGET) is disordered. The segment covering 555–570 (HGGEDRVPLEMEKEKP) has biased composition (basic and acidic residues). The Ubiquitin-interacting signature appears at 604–621 (LEEEATLQLAIHRSLESQ). Ser-617 carries the post-translational modification Phosphoserine. A myc binding region spans residues 649–856 (DEDTGGEAQL…CAHGFNRSFC (208 aa)). Residues 755–960 (PNLSEQGLKE…TCKNILPGTP (206 aa)) form the PARP catalytic domain. The PIP-box signature appears at 780-787 (QDVVRAFY). At Glu-831 the chain carries ADP-ribosyl glutamic acid.

Belongs to the ARTD/PARP family. As to quaternary structure, interacts with MYC. Interacts with PARP14. Interacts (via-PIP box and ubiquitin-interacting motifs) with PCNA. In terms of processing, stimulated through its phosphorylation by CDK2. Acquires CDK-dependent phosphorylation through late-G1 to S phase, and from prometaphase to cytokinesis in the nucleolar organizing regions. Phosphorylation is suppressed in growth-arrested cells. Auto-mono-ADP-ribosylated on glutamate and lysine residues.

The protein localises to the cytoplasm. The protein resides in the nucleus. The enzyme catalyses L-lysyl-[protein] + NAD(+) = N(6)-(ADP-D-ribosyl)-L-lysyl-[protein] + nicotinamide + H(+). The catalysed reaction is L-aspartyl-[protein] + NAD(+) = 4-O-(ADP-D-ribosyl)-L-aspartyl-[protein] + nicotinamide. It catalyses the reaction L-glutamyl-[protein] + NAD(+) = 5-O-(ADP-D-ribosyl)-L-glutamyl-[protein] + nicotinamide. Functionally, ADP-ribosyltransferase that mediates mono-ADP-ribosylation of glutamate and aspartate residues on target proteins. In contrast to PARP1 and PARP2, it is not able to mediate poly-ADP-ribosylation. Catalyzes mono-ADP-ribosylation of GSK3B, leading to negatively regulate GSK3B kinase activity. Involved in translesion DNA synthesis in response to DNA damage via its interaction with PCNA. The chain is Protein mono-ADP-ribosyltransferase PARP10 from Mus musculus (Mouse).